The chain runs to 122 residues: Large ribosomal subunit protein uL14 (122 aa).

It belongs to the universal ribosomal protein uL14 family. In terms of assembly, part of the 50S ribosomal subunit. Forms a cluster with proteins L3 and L19. In the 70S ribosome, L14 and L19 interact and together make contacts with the 16S rRNA in bridges B5 and B8.

In terms of biological role, binds to 23S rRNA. Forms part of two intersubunit bridges in the 70S ribosome. This Latilactobacillus sakei subsp. sakei (strain 23K) (Lactobacillus sakei subsp. sakei) protein is Large ribosomal subunit protein uL14.